Reading from the N-terminus, the 168-residue chain is Transcriptional regulator MraZ (168 aa).

2 SpoVT-AbrB domains span residues 8 to 51 (EYNQ…GGDR) and 90 to 140 (ALNM…KADT).

The protein belongs to the MraZ family. As to quaternary structure, forms oligomers.

It localises to the cytoplasm. The protein resides in the nucleoid. This is Transcriptional regulator MraZ from Cereibacter sphaeroides (strain ATCC 17029 / ATH 2.4.9) (Rhodobacter sphaeroides).